Here is a 432-residue protein sequence, read N- to C-terminus: Glutamate-1-semialdehyde 2,1-aminomutase (432 aa).

Position 265 is an N6-(pyridoxal phosphate)lysine (Lys-265).

It belongs to the class-III pyridoxal-phosphate-dependent aminotransferase family. HemL subfamily. In terms of assembly, homodimer. The cofactor is pyridoxal 5'-phosphate.

It is found in the cytoplasm. The catalysed reaction is (S)-4-amino-5-oxopentanoate = 5-aminolevulinate. It participates in porphyrin-containing compound metabolism; protoporphyrin-IX biosynthesis; 5-aminolevulinate from L-glutamyl-tRNA(Glu): step 2/2. In Histophilus somni (strain 2336) (Haemophilus somnus), this protein is Glutamate-1-semialdehyde 2,1-aminomutase.